Consider the following 306-residue polypeptide: tRNA dimethylallyltransferase (306 aa).

Position 2 to 9 (2 to 9 (GPTASGKT)) interacts with ATP. 4-9 (TASGKT) is a binding site for substrate. Interaction with substrate tRNA regions lie at residues 27 to 30 (DSVQ) and 152 to 156 (QRIVR).

This sequence belongs to the IPP transferase family. In terms of assembly, monomer. Requires Mg(2+) as cofactor.

The enzyme catalyses adenosine(37) in tRNA + dimethylallyl diphosphate = N(6)-dimethylallyladenosine(37) in tRNA + diphosphate. Functionally, catalyzes the transfer of a dimethylallyl group onto the adenine at position 37 in tRNAs that read codons beginning with uridine, leading to the formation of N6-(dimethylallyl)adenosine (i(6)A). This is tRNA dimethylallyltransferase from Magnetococcus marinus (strain ATCC BAA-1437 / JCM 17883 / MC-1).